The sequence spans 210 residues: Meiotic coiled-coil protein 7 (210 aa).

A coiled-coil region spans residues 77–148 (KRSRESVLGS…LKTQLSNLNH (72 aa)).

It belongs to the MND1 family. As to quaternary structure, interacts with meu13.

Its subcellular location is the cytoplasm. The protein resides in the nucleus. Required for meiotic recombination. The protein is Meiotic coiled-coil protein 7 (mcp7) of Schizosaccharomyces pombe (strain 972 / ATCC 24843) (Fission yeast).